The primary structure comprises 429 residues: 26S proteasome regulatory subunit 6A homolog (429 aa).

The disordered stretch occupies residues M1–Q21. Position 217-224 (G217–T224) interacts with ATP.

This sequence belongs to the AAA ATPase family.

The protein resides in the cytoplasm. Its subcellular location is the nucleus. Its function is as follows. The 26S proteasome is involved in the ATP-dependent degradation of ubiquitinated proteins. The regulatory (or ATPase) complex confers ATP dependency and substrate specificity to the 26S complex. This chain is 26S proteasome regulatory subunit 6A homolog (TBP1), found in Oryza sativa subsp. japonica (Rice).